The sequence spans 426 residues: Histidine--tRNA ligase (426 aa).

This sequence belongs to the class-II aminoacyl-tRNA synthetase family.

It is found in the cytoplasm. The enzyme catalyses tRNA(His) + L-histidine + ATP = L-histidyl-tRNA(His) + AMP + diphosphate + H(+). The chain is Histidine--tRNA ligase from Sulfurisphaera tokodaii (strain DSM 16993 / JCM 10545 / NBRC 100140 / 7) (Sulfolobus tokodaii).